Here is a 318-residue protein sequence, read N- to C-terminus: Acetyl-coenzyme A carboxylase carboxyl transferase subunit alpha (318 aa).

A CoA carboxyltransferase C-terminal domain is found at H41 to E295.

This sequence belongs to the AccA family. As to quaternary structure, acetyl-CoA carboxylase is a heterohexamer composed of biotin carboxyl carrier protein (AccB), biotin carboxylase (AccC) and two subunits each of ACCase subunit alpha (AccA) and ACCase subunit beta (AccD).

It localises to the cytoplasm. The enzyme catalyses N(6)-carboxybiotinyl-L-lysyl-[protein] + acetyl-CoA = N(6)-biotinyl-L-lysyl-[protein] + malonyl-CoA. It functions in the pathway lipid metabolism; malonyl-CoA biosynthesis; malonyl-CoA from acetyl-CoA: step 1/1. Component of the acetyl coenzyme A carboxylase (ACC) complex. First, biotin carboxylase catalyzes the carboxylation of biotin on its carrier protein (BCCP) and then the CO(2) group is transferred by the carboxyltransferase to acetyl-CoA to form malonyl-CoA. The polypeptide is Acetyl-coenzyme A carboxylase carboxyl transferase subunit alpha (Tolumonas auensis (strain DSM 9187 / NBRC 110442 / TA 4)).